We begin with the raw amino-acid sequence, 501 residues long: Glutamate--tRNA ligase (501 aa).

Positions 11–21 match the 'HIGH' region motif; it reads PSPTGFLHIGN. Residues 257–261 carry the 'KMSKS' region motif; sequence KLSKR. Position 260 (K260) interacts with ATP.

The protein belongs to the class-I aminoacyl-tRNA synthetase family. Glutamate--tRNA ligase type 1 subfamily. In terms of assembly, monomer.

It localises to the cytoplasm. It catalyses the reaction tRNA(Glu) + L-glutamate + ATP = L-glutamyl-tRNA(Glu) + AMP + diphosphate. Functionally, catalyzes the attachment of glutamate to tRNA(Glu) in a two-step reaction: glutamate is first activated by ATP to form Glu-AMP and then transferred to the acceptor end of tRNA(Glu). This chain is Glutamate--tRNA ligase, found in Limosilactobacillus reuteri subsp. reuteri (strain JCM 1112) (Lactobacillus reuteri).